The following is a 791-amino-acid chain: Cytochrome c oxidase polypeptide I+III (791 aa).

The COX1 stretch occupies residues 1 to 473 (MAITAKPKAG…LLSTIGAYIL (473 aa)). Residues 29-49 (LMYTATAFFAFALAGVFSLLI) form a helical membrane-spanning segment. His73 contributes to the Fe(II)-heme a binding site. A run of 17 helical transmembrane segments spans residues 78-98 (LFFF…VPLM), 111-131 (AFSY…YFFP), 155-175 (FYLA…ANFV), 201-221 (ASVL…LVLL), 244-264 (FFWF…LGIL), 282-302 (MVWA…HHMF), 312-332 (IAFA…LFNI), 347-367 (LYWV…GVML), 381-401 (FVVA…AFAG), 423-443 (FWLF…LGYL), 464-484 (LLST…IYTM), 566-586 (FAFF…WVFL), 617-637 (AWMG…ILIA), 657-677 (LWLA…VHFA), 691-711 (FGLL…SWEF), 729-749 (FFTI…GLIL), and 771-791 (SMYW…FYVW). The Cu cation site is built by His250, Tyr254, His299, and His300. A cross-link (1'-histidyl-3'-tyrosine (His-Tyr)) is located at residues 250 to 254 (HPTVY). His385 contacts heme a3. His387 contacts Fe(II)-heme a. A COX3 region spans residues 545 to 791 (DPAHIHLPNS…LVIVTIFYVW (247 aa)).

The protein in the N-terminal section; belongs to the heme-copper respiratory oxidase family. In the C-terminal section; belongs to the cytochrome c oxidase subunit 3 family. In terms of assembly, possibly a heterodimer of A-protein (contains: cytochrome c oxidase subunits I and III) and subunit II. The A-protein could also present a precursor form of subunits I and III. It depends on Cu(2+) as a cofactor. Heme is required as a cofactor.

Its subcellular location is the cell membrane. The enzyme catalyses 4 Fe(II)-[cytochrome c] + O2 + 8 H(+)(in) = 4 Fe(III)-[cytochrome c] + 2 H2O + 4 H(+)(out). Its pathway is energy metabolism; oxidative phosphorylation. In terms of biological role, cytochrome c oxidase is the component of the respiratory chain that catalyzes the reduction of oxygen to water. Subunits 1-3 form the functional core of the enzyme complex. Co I is the catalytic subunit of the enzyme. Electrons originating in cytochrome c are transferred via the copper A center of subunit 2 and heme a of subunit 1 to the bimetallic center formed by heme a3 and copper B. This cytochrome c oxidase shows proton pump activity across the membrane in addition to the electron transfer. The chain is Cytochrome c oxidase polypeptide I+III (caaA) from Thermus thermophilus (strain ATCC 27634 / DSM 579 / HB8).